A 192-amino-acid polypeptide reads, in one-letter code: Protein GrpE (192 aa).

This sequence belongs to the GrpE family. Homodimer.

It localises to the cytoplasm. Its function is as follows. Participates actively in the response to hyperosmotic and heat shock by preventing the aggregation of stress-denatured proteins, in association with DnaK and GrpE. It is the nucleotide exchange factor for DnaK and may function as a thermosensor. Unfolded proteins bind initially to DnaJ; upon interaction with the DnaJ-bound protein, DnaK hydrolyzes its bound ATP, resulting in the formation of a stable complex. GrpE releases ADP from DnaK; ATP binding to DnaK triggers the release of the substrate protein, thus completing the reaction cycle. Several rounds of ATP-dependent interactions between DnaJ, DnaK and GrpE are required for fully efficient folding. This is Protein GrpE from Neisseria gonorrhoeae (strain NCCP11945).